A 683-amino-acid chain; its full sequence is Phenoloxidase 3 (683 aa).

The propeptide occupies 1–48; sequence MADKKNLLLLFDHPTEPVFMDKGGNGTVFDVPDSYVTDRYNQMCKKVQ. Cu cation-binding residues include histidine 209, histidine 213, and histidine 239. The active-site Proton acceptor is the glutamate 351. N-linked (GlcNAc...) asparagine glycosylation is present at asparagine 358. Cu cation-binding residues include histidine 366, histidine 370, and histidine 406. Asparagine 492 and asparagine 546 each carry an N-linked (GlcNAc...) asparagine glycan. Disulfide bonds link cysteine 574–cysteine 617 and cysteine 576–cysteine 624.

It belongs to the tyrosinase family. It depends on Cu(2+) as a cofactor. Upon activation, a trypsin type protease cleaves prophenol oxidase to yield the active enzyme.

The protein localises to the secreted. The catalysed reaction is 2 L-dopa + O2 = 2 L-dopaquinone + 2 H2O. It catalyses the reaction L-tyrosine + O2 = L-dopaquinone + H2O. Its function is as follows. This is a copper-containing oxidase that functions in the formation of pigments such as melanins and other polyphenolic compounds. Catalyzes the rate-limiting conversions of tyrosine to DOPA, DOPA to DOPA-quinone and possibly 5,6 dihydroxyindole to indole-5'6 quinone. The protein is Phenoloxidase 3 (PPO3) of Drosophila melanogaster (Fruit fly).